The following is a 237-amino-acid chain: MTRKAVVLYSGGLDSTTCLAIARAEGFEPHAMSFSYGQRHSVELELAKRNARPAGAVEHMVVEFDLRKVGGSALTADIAVPKEGVGDDIPVTYVPARNTIFLSFALGWAEVLGAFDIFIGVNALDYSGYPDCRPEYISAFETMANLATRVGVEGTGRFRIHAPLMRLTKAEIIRKGLALGVDYGLTHSCYDPSPAGVACGLCDSCRLRLKGFAEVGVADPVPYVTGGQGLGGGKETP.

Tyr9–Leu19 is an ATP binding site. Cys189, Cys199, Cys202, and Cys205 together coordinate Zn(2+).

Belongs to the QueC family. It depends on Zn(2+) as a cofactor.

The catalysed reaction is 7-carboxy-7-deazaguanine + NH4(+) + ATP = 7-cyano-7-deazaguanine + ADP + phosphate + H2O + H(+). It functions in the pathway purine metabolism; 7-cyano-7-deazaguanine biosynthesis. In terms of biological role, catalyzes the ATP-dependent conversion of 7-carboxy-7-deazaguanine (CDG) to 7-cyano-7-deazaguanine (preQ(0)). The chain is 7-cyano-7-deazaguanine synthase from Geobacter sulfurreducens (strain ATCC 51573 / DSM 12127 / PCA).